The primary structure comprises 291 residues: Probable endonuclease 4 (291 aa).

Residues H72, H112, E147, D181, H184, H215, D228, H230, and E260 each coordinate Zn(2+).

The protein belongs to the AP endonuclease 2 family. Zn(2+) serves as cofactor.

It catalyses the reaction Endonucleolytic cleavage to 5'-phosphooligonucleotide end-products.. Functionally, endonuclease IV plays a role in DNA repair. It cleaves phosphodiester bonds at apurinic or apyrimidinic (AP) sites, generating a 3'-hydroxyl group and a 5'-terminal sugar phosphate. This Mycoplasma genitalium (strain ATCC 33530 / DSM 19775 / NCTC 10195 / G37) (Mycoplasmoides genitalium) protein is Probable endonuclease 4.